Consider the following 240-residue polypeptide: Pyridoxine 5'-phosphate synthase (240 aa).

Asn-7 serves as a coordination point for 3-amino-2-oxopropyl phosphate. 9–10 serves as a coordination point for 1-deoxy-D-xylulose 5-phosphate; that stretch reads DH. A 3-amino-2-oxopropyl phosphate-binding site is contributed by Arg-18. His-43 functions as the Proton acceptor in the catalytic mechanism. Arg-45 and His-50 together coordinate 1-deoxy-D-xylulose 5-phosphate. Glu-70 functions as the Proton acceptor in the catalytic mechanism. Position 100 (Thr-100) interacts with 1-deoxy-D-xylulose 5-phosphate. His-191 (proton donor) is an active-site residue. Residues Gly-192 and 213-214 contribute to the 3-amino-2-oxopropyl phosphate site; that span reads GH.

This sequence belongs to the PNP synthase family. As to quaternary structure, homooctamer; tetramer of dimers.

It is found in the cytoplasm. It carries out the reaction 3-amino-2-oxopropyl phosphate + 1-deoxy-D-xylulose 5-phosphate = pyridoxine 5'-phosphate + phosphate + 2 H2O + H(+). It functions in the pathway cofactor biosynthesis; pyridoxine 5'-phosphate biosynthesis; pyridoxine 5'-phosphate from D-erythrose 4-phosphate: step 5/5. Its function is as follows. Catalyzes the complicated ring closure reaction between the two acyclic compounds 1-deoxy-D-xylulose-5-phosphate (DXP) and 3-amino-2-oxopropyl phosphate (1-amino-acetone-3-phosphate or AAP) to form pyridoxine 5'-phosphate (PNP) and inorganic phosphate. This chain is Pyridoxine 5'-phosphate synthase, found in Crocosphaera subtropica (strain ATCC 51142 / BH68) (Cyanothece sp. (strain ATCC 51142)).